The chain runs to 396 residues: NADH-quinone oxidoreductase subunit D (396 aa).

It belongs to the complex I 49 kDa subunit family. As to quaternary structure, NDH-1 is composed of 14 different subunits. Subunits NuoB, C, D, E, F, and G constitute the peripheral sector of the complex.

It localises to the cell inner membrane. It catalyses the reaction a quinone + NADH + 5 H(+)(in) = a quinol + NAD(+) + 4 H(+)(out). In terms of biological role, NDH-1 shuttles electrons from NADH, via FMN and iron-sulfur (Fe-S) centers, to quinones in the respiratory chain. The immediate electron acceptor for the enzyme in this species is believed to be ubiquinone. Couples the redox reaction to proton translocation (for every two electrons transferred, four hydrogen ions are translocated across the cytoplasmic membrane), and thus conserves the redox energy in a proton gradient. The polypeptide is NADH-quinone oxidoreductase subunit D (Mesorhizobium japonicum (strain LMG 29417 / CECT 9101 / MAFF 303099) (Mesorhizobium loti (strain MAFF 303099))).